A 363-amino-acid chain; its full sequence is Small ribosomal subunit biogenesis GTPase RsgA (363 aa).

In terms of domain architecture, CP-type G spans His-112–Leu-268. Residues Thr-157–Asp-160 and Gly-210–Thr-218 contribute to the GTP site. Residues Cys-291, Cys-296, His-298, and Cys-304 each contribute to the Zn(2+) site. The interval Arg-340–His-363 is disordered.

The protein belongs to the TRAFAC class YlqF/YawG GTPase family. RsgA subfamily. As to quaternary structure, monomer. Associates with 30S ribosomal subunit, binds 16S rRNA. The cofactor is Zn(2+).

The protein resides in the cytoplasm. In terms of biological role, one of several proteins that assist in the late maturation steps of the functional core of the 30S ribosomal subunit. Helps release RbfA from mature subunits. May play a role in the assembly of ribosomal proteins into the subunit. Circularly permuted GTPase that catalyzes slow GTP hydrolysis, GTPase activity is stimulated by the 30S ribosomal subunit. This chain is Small ribosomal subunit biogenesis GTPase RsgA, found in Xanthomonas axonopodis pv. citri (strain 306).